The chain runs to 245 residues: Exosome complex component RRP41 (245 aa).

Ala-2 is subject to N-acetylalanine.

This sequence belongs to the RNase PH family. Component of the RNA exosome core complex (Exo-9), composed of EXOSC1, EXOSC2, EXOSC3, EXOSC4, EXOSC5, EXOSC6, EXOSC7, EXOSC8 and EXOSC9; within the complex interacts with EXOSC2, EXOSC7 and EXOSC9. The catalytically inactive RNA exosome core complex (Exo-9) associates with the catalytic subunit EXOSC10/RRP6. Exo-9 may associate with DIS3 to form the nucleolar exosome complex, or DIS3L to form the cytoplasmic exosome complex. Exo-9 is formed by a hexameric base ring consisting of the heterodimers EXOSC4-EXOSC9, EXOSC5-EXOSC8 and EXOSC6-EXOSC7, and a cap ring consisting of EXOSC1, EXOSC2 and EXOSC3. The RNA exosome complex associates with cofactors C1D/RRP47, MPHOSPH6/MPP6 and MTREX/MTR4. Interacts with DDX60. Interacts with DIS3; the interaction is direct.

It is found in the cytoplasm. Its subcellular location is the nucleus. It localises to the nucleolus. The protein localises to the nucleoplasm. In terms of biological role, non-catalytic component of the RNA exosome complex which has 3'-&gt;5' exoribonuclease activity and participates in a multitude of cellular RNA processing and degradation events. In the nucleus, the RNA exosome complex is involved in proper maturation of stable RNA species such as rRNA, snRNA and snoRNA, in the elimination of RNA processing by-products and non-coding 'pervasive' transcripts, such as antisense RNA species and promoter-upstream transcripts (PROMPTs), and of mRNAs with processing defects, thereby limiting or excluding their export to the cytoplasm. The RNA exosome may be involved in Ig class switch recombination (CSR) and/or Ig variable region somatic hypermutation (SHM) by targeting AICDA deamination activity to transcribed dsDNA substrates. In the cytoplasm, the RNA exosome complex is involved in general mRNA turnover and specifically degrades inherently unstable mRNAs containing AU-rich elements (AREs) within their 3' untranslated regions, and in RNA surveillance pathways, preventing translation of aberrant mRNAs. It seems to be involved in degradation of histone mRNA. The catalytic inactive RNA exosome core complex of 9 subunits (Exo-9) is proposed to play a pivotal role in the binding and presentation of RNA for ribonucleolysis, and to serve as a scaffold for the association with catalytic subunits and accessory proteins or complexes. EXOSC4 binds to ARE-containing RNAs. This chain is Exosome complex component RRP41 (EXOSC4), found in Homo sapiens (Human).